We begin with the raw amino-acid sequence, 543 residues long: Malate synthase (543 aa).

This sequence belongs to the malate synthase family. Homodimer.

The protein localises to the cytoplasm. It carries out the reaction glyoxylate + acetyl-CoA + H2O = (S)-malate + CoA + H(+). It functions in the pathway carbohydrate metabolism; glyoxylate cycle; (S)-malate from isocitrate: step 2/2. The polypeptide is Malate synthase (aceB) (Streptomyces arenae).